The primary structure comprises 80 residues: Homeobox protein 7 (80 aa).

A DNA-binding region (homeobox) is located at residues 8–67 (SNIRNIRSSGISTKKLEDFFSINQYPNKNEIKDFANYYQCDETKIKNWFKGKRDRLKKKS). The segment at 60-80 (RDRLKKKSSNNEKSGNKFYFK) is disordered. Residues 70–80 (NEKSGNKFYFK) show a composition bias toward low complexity.

It is found in the nucleus. Its function is as follows. Putative transcription factor. The chain is Homeobox protein 7 (hbx7) from Dictyostelium discoideum (Social amoeba).